Here is a 424-residue protein sequence, read N- to C-terminus: STAM-binding protein (424 aa).

The interaction with CHMP3 stretch occupies residues 1 to 127 (MSDHGDVSLP…YTEYNEEKKK (127 aa)). A phosphoserine mark is found at Ser-2 and Ser-48. The segment at 227–231 (PAKPP) is interaction with STAM. A phosphoserine mark is found at Ser-243, Ser-245, and Ser-247. In terms of domain architecture, MPN spans 257-388 (VVVPGRLCPQ…LTDHGLEEIS (132 aa)). Zn(2+)-binding residues include His-335, His-337, Asp-348, His-350, Cys-390, His-396, and His-398. A JAMM motif motif is present at residues 335-348 (HTHPTQTAFLSSVD).

Belongs to the peptidase M67C family. In terms of assembly, interacts with STAM. Interacts with SMAD6 and SMAD7. Interacts with CHMP3; the interaction appears to relieve the autoinhibition of CHMP3. Interacts with SMURF2 and RNF11; this interaction promotes ubiquitination. Zn(2+) serves as cofactor. Phosphorylated after BMP type I receptor activation. Post-translationally, ubiquitinated by SMURF2 in the presence of RNF11. Ubiquitously expressed.

The protein resides in the nucleus. It is found in the membrane. The protein localises to the cytoplasm. Its subcellular location is the early endosome. Its activity is regulated as follows. Inhibited by N-ethylmaleimide. Strongly and specifically inhibited by ubiquitin variants UbV(SP.2) and UbV(SP.3). Also inhibited by UbV(SP.1); an ubiquitin variant that also inhibits STAMBPL1. Functionally, zinc metalloprotease that specifically cleaves 'Lys-63'-linked polyubiquitin chains. Does not cleave 'Lys-48'-linked polyubiquitin chains. Plays a role in signal transduction for cell growth and MYC induction mediated by IL-2 and GM-CSF. Potentiates BMP (bone morphogenetic protein) signaling by antagonizing the inhibitory action of SMAD6 and SMAD7. Has a key role in regulation of cell surface receptor-mediated endocytosis and ubiquitin-dependent sorting of receptors to lysosomes. Endosomal localization of STAMBP is required for efficient EGFR degradation but not for its internalization. Involved in the negative regulation of PI3K-AKT-mTOR and RAS-MAP signaling pathways. This is STAM-binding protein (STAMBP) from Homo sapiens (Human).